An 883-amino-acid chain; its full sequence is MAPAPCGRSSQRVFHFGKGKSEGNKNMKELLGGKGANLAEMASIGLSVPPGFTVSTEACQQYQEAGRALPPGLWAEVLDGLRWVEEYMGAALGDPRRPLLLSVRSGAAVSMPGMMDTVLNLGLNDQVAAGLAAKSGDRFAYDSFRRFLDMFGNVVMDIPHALFEEKLEAMKKAKGLKNDTDLTATDLKELVSQYKNVYVEAKGEPFPSDPKRQLELAVLAVFDSWESPRAKKYRSINQITGLRGTAVNVQCMVFGNMGNTSGTGVLFTRNPNTGEKKLYGEFLVNAQGEDVVAGIRTPEDLDAMKDVMPQAYKELVENCRILESHYKEMQDIEFTVQESRLWMLQCRTGKRTGKSAVKIAVDMVNEGLVERRAAIKMVEPGHLDQLLHPQFENPSAYKDQVIATGLPASPGAAVGQVVFTAEDAETWHSQGKSVILVRAETSPEDVGGMHAAAGILTERGGMTSHAAVVARGWGKCCVSGCSGIRVNDAEKVVKIGGNVLREGEWLSLNGSTGEVILGKQPLSPPALSGDLGTFMSWVDDVRKLKVLANADTPEDALAARNNGAEGIGLCRTEHMFFASDERIKAVRQMIMAPTVELRQQALDRLLPYQRSDFEGIFRAMDGLSVTIRLLDPPLHEFLPEGNVEEIVRELCSETGANQEDALARIEKLSEVNPMLGFRGCRLGISYPELTEMQARAIFEAAIAMTNQGVQVFPEIMVPLVGTPQELGHQVALIRQVANKVFTSMGKTIGYKIGTMIEIPRAALVADEIAEQAEFFSFGTNDLTQMTFGYSRDDVGKFIPIYLAQGILQHDPFEVLDQRGVGELVKLATERGRKARPNLKVGICGEHGGEPSSVAFFAKTGLDYVSCSPFRVPIARLAAAQVLV.

The tract at residues methionine 1–serine 21 is disordered. Histidine 465 functions as the Tele-phosphohistidine intermediate in the catalytic mechanism. Residues arginine 571, arginine 628, glutamate 757, glycine 778, threonine 779, asparagine 780, and aspartate 781 each coordinate substrate. Glutamate 757 contributes to the Mg(2+) binding site. Aspartate 781 serves as a coordination point for Mg(2+). Residue cysteine 843 is the Proton donor of the active site.

Belongs to the PEP-utilizing enzyme family. Requires Mg(2+) as cofactor. Expressed in leaves, roots and stems.

It localises to the cytoplasm. The enzyme catalyses pyruvate + phosphate + ATP = phosphoenolpyruvate + AMP + diphosphate + H(+). Functionally, formation of phosphoenolpyruvate, which is the primary acceptor of CO(2) in C4 and some Crassulacean acid metabolism plants. This is Pyruvate, phosphate dikinase 2 from Zea mays (Maize).